The following is a 369-amino-acid chain: C2 calcium-dependent domain-containing protein 4A (369 aa).

2 disordered regions span residues 151 to 176 (PRAPGPATPAAPGCPRPPQDALARRP) and 197 to 240 (RSRR…PFPE). Residues 153-168 (APGPATPAAPGCPRPP) are compositionally biased toward pro residues. Over residues 220–237 (SQSPARAPSTSPPSSRVP) the composition is skewed to low complexity. One can recognise a C2 domain in the interval 253-369 (AGDALRLAAE…ELSLGALLLL (117 aa)).

Belongs to the C2CD4 family. In terms of tissue distribution, specifically expressed in endothelial cells.

The protein localises to the nucleus. In terms of biological role, may be involved in inflammatory process. May regulate cell architecture and adhesion. The chain is C2 calcium-dependent domain-containing protein 4A (C2CD4A) from Homo sapiens (Human).